The sequence spans 329 residues: Cytosolic arginine sensor for mTORC1 subunit 1 (329 aa).

Ser-14 is modified (phosphoserine). ACT domains lie at 72–138 (AEAT…HTLA) and 260–321 (GELW…EVLQ). Residues 111-112 (SV), Gly-274, 280-281 (IV), and 300-304 (TFNFD) each bind L-arginine.

The protein belongs to the GATS family. In terms of assembly, forms homodimers and heterodimers with CASTOR2. Interacts with the GATOR2 complex which is composed of MIOS, SEC13, SEH1L, WDR24 and WDR59; the interaction is negatively regulated by arginine. Interacts with TM4SF5; the interaction is positively regulated by leucine and is negatively regulated by arginine. In terms of processing, phosphorylation at Ser-14 by AKT1, promoting the interaction between CASTOR1 and RNF167. Ubiquitinated by RNF167 via 'Lys-29'-polyubiquitination, leading to its degradation, releasing the GATOR2 complex. Ubiquitination by RNF167 is promoted by phosphorylation at Ser-14 by AKT1.

The protein localises to the cytoplasm. It localises to the cytosol. Its function is as follows. Functions as an intracellular arginine sensor within the amino acid-sensing branch of the TORC1 signaling pathway. As a homodimer or a heterodimer with CASTOR2, binds and inhibits the GATOR subcomplex GATOR2 and thereby mTORC1. Binding of arginine to CASTOR1 allosterically disrupts the interaction of CASTOR1-containing dimers with GATOR2 which can in turn activate mTORC1 and the TORC1 signaling pathway. This is Cytosolic arginine sensor for mTORC1 subunit 1 from Pongo abelii (Sumatran orangutan).